Consider the following 348-residue polypeptide: D-alanine--D-alanine ligase (348 aa).

The 203-residue stretch at 132-334 (KRVLESIGIP…YPDLIEELVT (203 aa)) folds into the ATP-grasp domain. 162–217 (LARLTFPIFVKPANMGSSVGISKAQTKVELRKAIQLALTYDSRVLIEQGVVAREIE) is an ATP binding site. Residues Asp288, Glu301, and Asn303 each coordinate Mg(2+).

This sequence belongs to the D-alanine--D-alanine ligase family. The cofactor is Mg(2+). Requires Mn(2+) as cofactor.

It is found in the cytoplasm. It carries out the reaction 2 D-alanine + ATP = D-alanyl-D-alanine + ADP + phosphate + H(+). It participates in cell wall biogenesis; peptidoglycan biosynthesis. In terms of biological role, cell wall formation. This Streptococcus pyogenes serotype M6 (strain ATCC BAA-946 / MGAS10394) protein is D-alanine--D-alanine ligase.